The chain runs to 182 residues: UPF0397 protein BCAH820_2657 (182 aa).

Transmembrane regions (helical) follow at residues 9 to 29, 40 to 60, 71 to 91, 114 to 134, and 142 to 162; these read VVAI…GFTI, AILT…IGLI, WGIW…MGFI, ITGL…DIIV, and IVIQ…VLGL.

Belongs to the UPF0397 family.

The protein resides in the cell membrane. The polypeptide is UPF0397 protein BCAH820_2657 (Bacillus cereus (strain AH820)).